We begin with the raw amino-acid sequence, 79 residues long: Small ribosomal subunit protein uS17 (79 aa).

It belongs to the universal ribosomal protein uS17 family. As to quaternary structure, part of the 30S ribosomal subunit.

Its function is as follows. One of the primary rRNA binding proteins, it binds specifically to the 5'-end of 16S ribosomal RNA. The polypeptide is Small ribosomal subunit protein uS17 (Roseobacter denitrificans (strain ATCC 33942 / OCh 114) (Erythrobacter sp. (strain OCh 114))).